The following is a 403-amino-acid chain: Phosphopentomutase (403 aa).

Asp-13, Asp-298, His-303, Asp-339, His-340, and His-351 together coordinate Mn(2+).

The protein belongs to the phosphopentomutase family. The cofactor is Mn(2+).

The protein localises to the cytoplasm. The catalysed reaction is 2-deoxy-alpha-D-ribose 1-phosphate = 2-deoxy-D-ribose 5-phosphate. It carries out the reaction alpha-D-ribose 1-phosphate = D-ribose 5-phosphate. Its pathway is carbohydrate degradation; 2-deoxy-D-ribose 1-phosphate degradation; D-glyceraldehyde 3-phosphate and acetaldehyde from 2-deoxy-alpha-D-ribose 1-phosphate: step 1/2. Isomerase that catalyzes the conversion of deoxy-ribose 1-phosphate (dRib-1-P) and ribose 1-phosphate (Rib-1-P) to deoxy-ribose 5-phosphate (dRib-5-P) and ribose 5-phosphate (Rib-5-P), respectively. The sequence is that of Phosphopentomutase from Streptococcus pyogenes serotype M2 (strain MGAS10270).